The primary structure comprises 648 residues: 1-deoxy-D-xylulose-5-phosphate synthase (648 aa).

Thiamine diphosphate-binding positions include His72 and 113–115; that span reads GHA. Asp144 contributes to the Mg(2+) binding site. Residues 145-146, Asn173, and Glu363 each bind thiamine diphosphate; that span reads GA. Asn173 contacts Mg(2+).

Belongs to the transketolase family. DXPS subfamily. Homodimer. Mg(2+) serves as cofactor. It depends on thiamine diphosphate as a cofactor.

It carries out the reaction D-glyceraldehyde 3-phosphate + pyruvate + H(+) = 1-deoxy-D-xylulose 5-phosphate + CO2. It participates in metabolic intermediate biosynthesis; 1-deoxy-D-xylulose 5-phosphate biosynthesis; 1-deoxy-D-xylulose 5-phosphate from D-glyceraldehyde 3-phosphate and pyruvate: step 1/1. Catalyzes the acyloin condensation reaction between C atoms 2 and 3 of pyruvate and glyceraldehyde 3-phosphate to yield 1-deoxy-D-xylulose-5-phosphate (DXP). The polypeptide is 1-deoxy-D-xylulose-5-phosphate synthase (Symbiobacterium thermophilum (strain DSM 24528 / JCM 14929 / IAM 14863 / T)).